A 222-amino-acid polypeptide reads, in one-letter code: Probable fimbrial chaperone EcpB (222 aa).

An N-terminal signal peptide occupies residues 1-20 (MKKHLLPLALLFSGISPAQA).

The protein belongs to the EcpB/EcpE family.

In terms of biological role, part of the ecpRABCDE operon, which encodes the E.coli common pilus (ECP). ECP is found in both commensal and pathogenic strains and plays a dual role in early-stage biofilm development and host cell recognition. The protein is Probable fimbrial chaperone EcpB (ecpB) of Escherichia coli (strain K12).